Reading from the N-terminus, the 86-residue chain is Cell division topological specificity factor (86 aa).

It belongs to the MinE family.

In terms of biological role, prevents the cell division inhibition by proteins MinC and MinD at internal division sites while permitting inhibition at polar sites. This ensures cell division at the proper site by restricting the formation of a division septum at the midpoint of the long axis of the cell. The sequence is that of Cell division topological specificity factor from Azoarcus sp. (strain BH72).